The following is an 87-amino-acid chain: Glutaredoxin (87 aa).

A Glutaredoxin domain is found at 1 to 87; the sequence is MFVVIFGRPG…LMKEQFGIVA (87 aa). Cysteine 11 and cysteine 14 form a disulfide bridge.

This sequence belongs to the glutaredoxin family. In terms of assembly, monomer.

The protein resides in the cytoplasm. In terms of biological role, has a glutathione-disulfide oxidoreductase activity in the presence of NADPH and glutathione reductase. Reduces low molecular weight disulfides and proteins. This Haemophilus influenzae (strain ATCC 51907 / DSM 11121 / KW20 / Rd) protein is Glutaredoxin (grxA).